The sequence spans 94 residues: Small ribosomal subunit protein bS18 (94 aa).

Belongs to the bacterial ribosomal protein bS18 family. In terms of assembly, part of the 30S ribosomal subunit. Forms a tight heterodimer with protein bS6.

Its function is as follows. Binds as a heterodimer with protein bS6 to the central domain of the 16S rRNA, where it helps stabilize the platform of the 30S subunit. The chain is Small ribosomal subunit protein bS18 from Rickettsia bellii (strain OSU 85-389).